The sequence spans 517 residues: ADP-ribosylation factor GTPase-activating protein 3 (517 aa).

The Arf-GAP domain maps to 10-126 (LTIFKRLRSV…IKALASQATR (117 aa)). The C4-type zinc-finger motif lies at 25-48 (CFDCGAKNPSWASITYGVFLCIDC). Positions 139-200 (VPPSSPPPKE…EQGPSVEGLN (62 aa)) are disordered. Polar residues predominate over residues 159–176 (EVSSTGWASAQPEPSLTP). Serine 231 bears the Phosphoserine mark. The stretch at 243–263 (NEIEKQAQAVDKMNAQEDLLS) forms a coiled coil. 2 positions are modified to phosphoserine: serine 271 and serine 275. The segment covering 291–305 (EKMNMSGKKKAESER) has biased composition (basic and acidic residues). 2 disordered regions span residues 291–349 (EKMN…SDDS) and 362–422 (MELR…QKKF). Over residues 312–333 (NSRSGISHSVTSDMQTIEQETP) the composition is skewed to polar residues. A Phosphoserine modification is found at serine 371. Residues 379–390 (YWKKETIKDTDP) show a composition bias toward basic and acidic residues. 6 positions are modified to phosphoserine: serine 429, serine 452, serine 454, serine 456, serine 458, and serine 459.

The protein resides in the cytoplasm. The protein localises to the golgi apparatus membrane. Its activity is regulated as follows. GAP activity stimulated by phosphatidylinositol 4,5-bisphosphate (PIP2). In terms of biological role, GTPase-activating protein (GAP) for ADP ribosylation factor 1 (ARF1). Hydrolysis of ARF1-bound GTP may lead to dissociation of coatomer from Golgi-derived membranes to allow fusion with target membranes. This is ADP-ribosylation factor GTPase-activating protein 3 from Bos taurus (Bovine).